Reading from the N-terminus, the 474-residue chain is tRNA-2-methylthio-N(6)-dimethylallyladenosine synthase (474 aa).

Residues 3–120 (KKLHIKTWGC…LPEMIDQIRD (118 aa)) enclose the MTTase N-terminal domain. Residues cysteine 12, cysteine 49, cysteine 83, cysteine 157, cysteine 161, and cysteine 164 each contribute to the [4Fe-4S] cluster site. Residues 143 to 375 (RADGPSAFVS…QDRITQQAMR (233 aa)) enclose the Radical SAM core domain. The TRAM domain occupies 378-441 (RQMLGTVQRI…TNSLRGTFVR (64 aa)).

It belongs to the methylthiotransferase family. MiaB subfamily. As to quaternary structure, monomer. Requires [4Fe-4S] cluster as cofactor.

It localises to the cytoplasm. The catalysed reaction is N(6)-dimethylallyladenosine(37) in tRNA + (sulfur carrier)-SH + AH2 + 2 S-adenosyl-L-methionine = 2-methylsulfanyl-N(6)-dimethylallyladenosine(37) in tRNA + (sulfur carrier)-H + 5'-deoxyadenosine + L-methionine + A + S-adenosyl-L-homocysteine + 2 H(+). Its function is as follows. Catalyzes the methylthiolation of N6-(dimethylallyl)adenosine (i(6)A), leading to the formation of 2-methylthio-N6-(dimethylallyl)adenosine (ms(2)i(6)A) at position 37 in tRNAs that read codons beginning with uridine. The polypeptide is tRNA-2-methylthio-N(6)-dimethylallyladenosine synthase (Shewanella sediminis (strain HAW-EB3)).